The chain runs to 372 residues: NAD(P)H-quinone oxidoreductase subunit 1 (372 aa).

Transmembrane regions (helical) follow at residues 27–47 (IIWL…GVLV), 97–117 (ILFT…WLIV), 128–148 (VGIG…GLLM), 176–196 (LALS…IDIV), 204–224 (ILSW…ICAL), 266–286 (ILSA…PIPV), 308–328 (SIGI…AILL), and 347–367 (FLLP…LAFP).

It belongs to the complex I subunit 1 family. In terms of assembly, NDH-1 is composed of at least 11 different subunits.

It is found in the cellular thylakoid membrane. The enzyme catalyses a plastoquinone + NADH + (n+1) H(+)(in) = a plastoquinol + NAD(+) + n H(+)(out). The catalysed reaction is a plastoquinone + NADPH + (n+1) H(+)(in) = a plastoquinol + NADP(+) + n H(+)(out). Functionally, NDH-1 shuttles electrons from an unknown electron donor, via FMN and iron-sulfur (Fe-S) centers, to quinones in the respiratory and/or the photosynthetic chain. The immediate electron acceptor for the enzyme in this species is believed to be plastoquinone. Couples the redox reaction to proton translocation, and thus conserves the redox energy in a proton gradient. The protein is NAD(P)H-quinone oxidoreductase subunit 1 of Prochlorococcus marinus (strain MIT 9215).